The following is a 362-amino-acid chain: P2Y purinoceptor 1 (362 aa).

Over 1-40 (MTEALISAALNGTQPELLAGGWAAGNASTKCSLTKTGFQF) the chain is Extracellular. N-linked (GlcNAc...) asparagine glycosylation is found at Asn11 and Asn26. 2 cysteine pairs are disulfide-bonded: Cys31–Cys285 and Cys113–Cys191. Residue Lys35 participates in ADP binding. Residues 41 to 63 (YYLPTVYILVFITGFLGNSVAIW) form a helical membrane-spanning segment. Residues 64-76 (MFVFHMRPWSGIS) are Cytoplasmic-facing. The helical transmembrane segment at 77 to 98 (VYMFNLALADFLYVLTLPALIF) threads the bilayer. Over 99-114 (YYFNKTDWIFGDVMCK) the chain is Extracellular. The N-linked (GlcNAc...) asparagine glycan is linked to Asn102. A helical membrane pass occupies residues 115 to 136 (LQRFIFHVNLYGSILFLTCISV). Topologically, residues 137-155 (HRYTGVVHPLKSLGRLKKK) are cytoplasmic. Residues 156-177 (NAVYVSSLVWALVVAVIAPILF) form a helical membrane-spanning segment. The Extracellular segment spans residues 178–203 (YSGTGVRRNKTITCYDTTADEYLRSY). Asn186 is a glycosylation site (N-linked (GlcNAc...) asparagine). 192 to 194 (YDT) contacts ADP. A helical transmembrane segment spans residues 204-226 (FVYSMCTTVFMFCIPFIVILGCY). Over 227 to 249 (GLIVKALIYKDLDNSPLRRKSIY) the chain is Cytoplasmic. Residues 250 to 273 (LVIIVLTVFAVSYLPFHVMKTLNL) traverse the membrane as a helical segment. ADP is bound by residues 272 to 276 (NLRAR), 292 to 295 (YATY), and Arg299. At 274–292 (RARLDFQTPQMCAFNDKVY) the chain is on the extracellular side. The chain crosses the membrane as a helical span at residues 293-314 (ATYQVTRGLASLNSCVDPILYF). Residues 315–362 (LAGDTFRRRLSRATRKSSRRSEPNVQSKSEEMTLNILTEYKQNGDTSL) are Cytoplasmic-facing.

The protein belongs to the G-protein coupled receptor 1 family. As to expression, mainly found in blood, brain, and lung. To a lesser extent in stomach, gut and skeletal muscle.

It localises to the cell membrane. In terms of biological role, receptor for extracellular adenine nucleotides such as ADP. In platelets, binding to ADP leads to mobilization of intracellular calcium ions via activation of phospholipase C, a change in platelet shape, and ultimately platelet aggregation. In Meleagris gallopavo (Wild turkey), this protein is P2Y purinoceptor 1 (P2RY1).